The sequence spans 587 residues: Adenine deaminase (587 aa).

This sequence belongs to the metallo-dependent hydrolases superfamily. Adenine deaminase family. Mn(2+) serves as cofactor.

The enzyme catalyses adenine + H2O + H(+) = hypoxanthine + NH4(+). In Shewanella halifaxensis (strain HAW-EB4), this protein is Adenine deaminase.